A 250-amino-acid polypeptide reads, in one-letter code: 5-oxoprolinase subunit A (250 aa).

Belongs to the LamB/PxpA family. As to quaternary structure, forms a complex composed of PxpA, PxpB and PxpC.

It carries out the reaction 5-oxo-L-proline + ATP + 2 H2O = L-glutamate + ADP + phosphate + H(+). In terms of biological role, catalyzes the cleavage of 5-oxoproline to form L-glutamate coupled to the hydrolysis of ATP to ADP and inorganic phosphate. This is 5-oxoprolinase subunit A from Nocardia farcinica (strain IFM 10152).